Reading from the N-terminus, the 294-residue chain is MLGDLFTKPKKRKYATIPSDGTKADVPEGIMTKCPECKKIMYTKELQKNLMVCNYCGFHHPIGAKVRIDMLVDEGSFEELDANLTTANPLGFENYMDRIEKDKQKSGLNEAIVTGHATIAGNPLVIAVMDSRFRMASMGSVVGEKILRAVEEADKTNKPFVVFTASGGARMQEGMISLMQMAKTSAAFKRFSNHGGLIITVMTHPTTGGVSASFASLGDYNFAEPGALIGFAGRRVIEQTVREELPEDFQTAEFLLKHGQLDDCISRLDLQNKLSFILRIHAKTPETGGESDGE.

The region spanning 30–294 is the CoA carboxyltransferase N-terminal domain; that stretch reads IMTKCPECKK…PETGGESDGE (265 aa). Zn(2+) contacts are provided by Cys-34, Cys-37, Cys-53, and Cys-56. The C4-type zinc finger occupies 34–56; it reads CPECKKIMYTKELQKNLMVCNYC.

Belongs to the AccD/PCCB family. Acetyl-CoA carboxylase is a heterohexamer composed of biotin carboxyl carrier protein (AccB), biotin carboxylase (AccC) and two subunits each of ACCase subunit alpha (AccA) and ACCase subunit beta (AccD). Zn(2+) serves as cofactor.

Its subcellular location is the cytoplasm. It catalyses the reaction N(6)-carboxybiotinyl-L-lysyl-[protein] + acetyl-CoA = N(6)-biotinyl-L-lysyl-[protein] + malonyl-CoA. Its pathway is lipid metabolism; malonyl-CoA biosynthesis; malonyl-CoA from acetyl-CoA: step 1/1. In terms of biological role, component of the acetyl coenzyme A carboxylase (ACC) complex. Biotin carboxylase (BC) catalyzes the carboxylation of biotin on its carrier protein (BCCP) and then the CO(2) group is transferred by the transcarboxylase to acetyl-CoA to form malonyl-CoA. In Listeria welshimeri serovar 6b (strain ATCC 35897 / DSM 20650 / CCUG 15529 / CIP 8149 / NCTC 11857 / SLCC 5334 / V8), this protein is Acetyl-coenzyme A carboxylase carboxyl transferase subunit beta.